The following is a 321-amino-acid chain: Isoaspartyl peptidase (321 aa).

Thr179 functions as the Nucleophile in the catalytic mechanism. Substrate is bound by residues 207–210 (RVGD) and 230–233 (TGTG).

The protein belongs to the Ntn-hydrolase family. Heterotetramer of two alpha and two beta chains arranged as a dimer of alpha/beta heterodimers. Autocleaved. Generates the alpha and beta subunits. The N-terminal residue of the beta subunit is thought to be responsible for the nucleophile hydrolase activity. In terms of processing, both subunits undergo further processing at their C-termini. The overexpressed alpha subunit seems to consist of residues 2-161, with an oxidized Met residue and a tightly coordinated Na(+), whereas the overexpressed beta subunit is processed to residue 315 and has 3 oxidized Met residues. Processing of the alpha subunit is inhibited by Zn(2+).

It catalyses the reaction Cleavage of a beta-linked Asp residue from the N-terminus of a polypeptide.. Functionally, degrades proteins damaged by L-isoaspartyl residue formation (also known as beta-Asp residues). Degrades L-isoaspartyl-containing di- and maybe also tripeptides. Also has L-asparaginase activity, although this may not be its principal function. May be involved in glutathione, and possibly other peptide, transport, although these results could also be due to polar effects of disruption. This Escherichia coli (strain K12) protein is Isoaspartyl peptidase (iaaA).